The following is a 476-amino-acid chain: Ribulose bisphosphate carboxylase large chain (476 aa).

Positions 1 to 2 are excised as a propeptide; sequence MS. Pro3 bears the N-acetylproline mark. Lys14 bears the N6,N6,N6-trimethyllysine mark. Residues Asn123 and Thr173 each contribute to the substrate site. The active-site Proton acceptor is the Lys175. Lys177 is a substrate binding site. Positions 201, 203, and 204 each coordinate Mg(2+). Position 201 is an N6-carboxylysine (Lys201). His294 serves as the catalytic Proton acceptor. Residues Arg295, His327, and Ser379 each coordinate substrate.

It belongs to the RuBisCO large chain family. Type I subfamily. As to quaternary structure, heterohexadecamer of 8 large chains and 8 small chains; disulfide-linked. The disulfide link is formed within the large subunit homodimers. The cofactor is Mg(2+). The disulfide bond which can form in the large chain dimeric partners within the hexadecamer appears to be associated with oxidative stress and protein turnover.

Its subcellular location is the plastid. The protein resides in the chloroplast. It catalyses the reaction 2 (2R)-3-phosphoglycerate + 2 H(+) = D-ribulose 1,5-bisphosphate + CO2 + H2O. It carries out the reaction D-ribulose 1,5-bisphosphate + O2 = 2-phosphoglycolate + (2R)-3-phosphoglycerate + 2 H(+). RuBisCO catalyzes two reactions: the carboxylation of D-ribulose 1,5-bisphosphate, the primary event in carbon dioxide fixation, as well as the oxidative fragmentation of the pentose substrate in the photorespiration process. Both reactions occur simultaneously and in competition at the same active site. The sequence is that of Ribulose bisphosphate carboxylase large chain from Setaria italica (Foxtail millet).